The following is an 85-amino-acid chain: Neurotoxin BmKAEP2 (85 aa).

Residues M1–A21 form the signal peptide. One can recognise an LCN-type CS-alpha/beta domain in the interval D22–G82. 4 disulfide bridges follow: C31-C81, C35-C56, C42-C63, and C46-C65.

This sequence belongs to the long (4 C-C) scorpion toxin superfamily. Sodium channel inhibitor family. Beta subfamily. In terms of tissue distribution, expressed by the venom gland.

The protein localises to the secreted. In terms of biological role, depressant insect beta-toxins cause a transient contraction paralysis followed by a slow flaccid paralysis. They bind voltage-independently at site-4 of sodium channels (Nav) and shift the voltage of activation toward more negative potentials thereby affecting sodium channel activation and promoting spontaneous and repetitive firing. This toxin is active only on insects. Has potential anti-epilepsy effect. The sequence is that of Neurotoxin BmKAEP2 from Olivierus martensii (Manchurian scorpion).